The chain runs to 387 residues: Arginine biosynthesis bifunctional protein ArgJ 2 (387 aa).

T147, K169, T180, E259, N382, and T387 together coordinate substrate. The active-site Nucleophile is T180.

Belongs to the ArgJ family. As to quaternary structure, heterotetramer of two alpha and two beta chains.

The protein localises to the cytoplasm. The catalysed reaction is N(2)-acetyl-L-ornithine + L-glutamate = N-acetyl-L-glutamate + L-ornithine. It catalyses the reaction L-glutamate + acetyl-CoA = N-acetyl-L-glutamate + CoA + H(+). It functions in the pathway amino-acid biosynthesis; L-arginine biosynthesis; L-ornithine and N-acetyl-L-glutamate from L-glutamate and N(2)-acetyl-L-ornithine (cyclic): step 1/1. Its pathway is amino-acid biosynthesis; L-arginine biosynthesis; N(2)-acetyl-L-ornithine from L-glutamate: step 1/4. Catalyzes two activities which are involved in the cyclic version of arginine biosynthesis: the synthesis of N-acetylglutamate from glutamate and acetyl-CoA as the acetyl donor, and of ornithine by transacetylation between N(2)-acetylornithine and glutamate. This is Arginine biosynthesis bifunctional protein ArgJ 2 from Nostoc sp. (strain PCC 7120 / SAG 25.82 / UTEX 2576).